The following is a 70-amino-acid chain: MKPGIHPEYAQITATCTCGNVIKINSTVGKDLHLDVCGACHPFYTGTQKVVDTGGRIDKFNKRFGMLGKK.

Residues Cys-16, Cys-18, Cys-37, and Cys-40 each coordinate Zn(2+).

Belongs to the bacterial ribosomal protein bL31 family. Type A subfamily. In terms of assembly, part of the 50S ribosomal subunit. Zn(2+) is required as a cofactor.

In terms of biological role, binds the 23S rRNA. In Shewanella amazonensis (strain ATCC BAA-1098 / SB2B), this protein is Large ribosomal subunit protein bL31.